Here is a 671-residue protein sequence, read N- to C-terminus: Zinc finger and BTB domain-containing protein 16-A (671 aa).

Residues 34 to 96 (CDVVIMVDSQ…AYTATLQAKV (63 aa)) enclose the BTB domain. 2 disordered regions span residues 130–167 (ENDT…TEES) and 248–289 (VDES…RSSV). Positions 270-279 (RSGEPDKNRD) are enriched in basic and acidic residues. Position 283 is a phosphothreonine (Thr-283). 9 consecutive C2H2-type zinc fingers follow at residues 401-423 (ERCN…RKLH), 429-451 (YGCE…LLSH), 458-480 (IVCD…RQIH), 487-509 (IFCL…MEVH), 515-537 (YICS…LRSH), 544-566 (FECE…KRIH), 572-594 (YECN…YRVH), 600-622 (FECK…LRTH), and 628-650 (YQCT…MKGH).

Belongs to the krueppel C2H2-type zinc-finger protein family. Interacts with btbd6a (via BTB domain). In terms of processing, polyubiquitinated, leading to its proteasomal degradation. During early stages of primary neurogenesis, expressed in the neural epithelium, with highest levels in the forebrain and midbrain. Also expressed in a posterior-to-anterior gradient in the caudal neural plate at the 3-6 somite stage.

It is found in the nucleus. It localises to the cytoplasm. It participates in protein modification; protein ubiquitination. In terms of biological role, probable transcription factor. Probable substrate-recognition component of an E3 ubiquitin-protein ligase complex which mediates the ubiquitination and subsequent proteasomal degradation of target proteins. Inhibits neurogenesis. The chain is Zinc finger and BTB domain-containing protein 16-A from Danio rerio (Zebrafish).